We begin with the raw amino-acid sequence, 355 residues long: MVRASSSKKGGSKGGDKDDAESKQRKRLKTLALDNQLLSDSPAKSHSSLKPSKQVLKHHGTDIIRKSQRKNRFLFSFPGLLAPISAATIGDLDRLSTKNPVLYLNFPQGRMKLFGTILYPKNRYLTLQFSRGGKNVLCDDYFDNMIVFSESWWIGTKEENPEEARLDFPKELAQAENTEFDFQGGAGGAASVKKLASPEIGSQPTETDSPEVDNEDVLSEDGEFLDDKIQVTPPVQLTPPVQVTPVRQSQRNSGKKFNFAETSSEASSGESEGNTSDEDEKPLLEPESSTRSREESQDGNGITASASKLPEELPAKREKLKSKDSKLVQATLSNLFKKAEEKTAGTSKAKSSSKA.

Disordered stretches follow at residues 1 to 26, 181 to 215, and 229 to 355; these read MVRA…KQRK, DFQG…VDNE, and IQVT…SSKA. The span at 14–23 shows a compositional bias: basic and acidic residues; the sequence is GGDKDDAESK. 2 stretches are compositionally biased toward low complexity: residues 230 to 246 and 260 to 274; these read QVTP…VTPV and AETS…SEGN. Basic and acidic residues-rich tracts occupy residues 281-296 and 309-326; these read KPLL…REES and LPEE…KDSK. Residues 344–355 are compositionally biased toward low complexity; sequence AGTSKAKSSSKA.

Interacts with BIN4 and TOP6A, but not with TOP6B. Expressed inproliferating and endoreduplicating cells.

The protein resides in the nucleus. Component of the DNA topoisomerase VI complex involved in chromatin organization and progression of endoreduplication cycles. Binds to DNA. Required for endoreduplication beyond 8C. The polypeptide is DNA-binding protein RHL1 (RHL1) (Arabidopsis thaliana (Mouse-ear cress)).